The primary structure comprises 100 residues: Large ribosomal subunit protein uL23 (100 aa).

This sequence belongs to the universal ribosomal protein uL23 family. In terms of assembly, part of the 50S ribosomal subunit. Contacts protein L29, and trigger factor when it is bound to the ribosome.

Functionally, one of the early assembly proteins it binds 23S rRNA. One of the proteins that surrounds the polypeptide exit tunnel on the outside of the ribosome. Forms the main docking site for trigger factor binding to the ribosome. The protein is Large ribosomal subunit protein uL23 of Prochlorococcus marinus (strain MIT 9515).